The primary structure comprises 250 residues: Proteasome subunit alpha type-4-2 (250 aa).

In terms of assembly, the 26S proteasome consists of a 20S proteasome core and two 19S regulatory subunits. The 20S proteasome core is composed of 28 subunits that are arranged in four stacked rings, resulting in a barrel-shaped structure. The two end rings are each formed by seven alpha subunits, and the two central rings are each formed by seven beta subunits. The catalytic chamber with the active sites is on the inside of the barrel.

The protein localises to the cytoplasm. It localises to the nucleus. In terms of biological role, the proteasome is a multicatalytic proteinase complex which is characterized by its ability to cleave peptides with Arg, Phe, Tyr, Leu, and Glu adjacent to the leaving group at neutral or slightly basic pH. The proteasome has an ATP-dependent proteolytic activity. The chain is Proteasome subunit alpha type-4-2 from Oryza sativa subsp. indica (Rice).